A 51-amino-acid polypeptide reads, in one-letter code: Large ribosomal subunit protein eL40 (51 aa).

Belongs to the eukaryotic ribosomal protein eL40 family.

In Thermofilum pendens (strain DSM 2475 / Hrk 5), this protein is Large ribosomal subunit protein eL40.